The primary structure comprises 1197 residues: Protein timeless homolog (1197 aa).

The required for homodimerization and for interaction with CRY1 and CHEK1 stretch occupies residues 1-309 (MDLYMMNCEL…GLHNLQNYSS (309 aa)). S281 carries the post-translational modification Phosphoserine. Disordered regions lie at residues 647 to 674 (STPLPRQQEPEEGDAEEEEEEEEEEELQ) and 943 to 1002 (RKKL…SAEN). Over residues 656–673 (PEEGDAEEEEEEEEEEEL) the composition is skewed to acidic residues. A DNA-binding domain region spans residues 810 to 949 (SHRAPLWSPE…KKRRKKLAPS (140 aa)). Over residues 963–985 (QEDPEEEDEHLPEDESEDEESEE) the composition is skewed to acidic residues. Low complexity predominate over residues 986–999 (GLPSGQGQGSSSLS). An interaction with PARP1 region spans residues 997–1095 (SLSAENLGES…TQLRRVAASL (99 aa)). 2 positions are modified to phosphoserine: S1071 and S1084. Residues 1079–1197 (IPAKLSSTQL…KRFQIEDEDD (119 aa)) form a required for nuclear localization region. T1086 carries the phosphothreonine modification. The tract at residues 1088–1197 (LRRVAASLSQ…KRFQIEDEDD (110 aa)) is disordered. 2 stretches are compositionally biased toward acidic residues: residues 1099 to 1109 (ENEEEREEEPE) and 1143 to 1153 (TEEEATGEEEW). The residue at position 1165 (S1165) is a Phosphoserine.

It belongs to the timeless family. In terms of assembly, monomer. Homodimer or homomultimer. Component of the circadian core oscillator, which includes the CRY proteins, CLOCK or NPAS2, ARTNL/BMAL1 or ARTNL2/BMAL2, CSKN1D and/or CSNK1E, TIMELESS, and the PER proteins. Interacts directly with PER2; the interaction with PER2 is via its second PAS domain. Interacts directly with PER1 and PER3. Interacts with CRY1. Interacts with CRY2. Interacts with CHEK1, ATR and ATRIP. Interacts with CLSPN. Interacts (via N-terminus) with TIPIN. The TIMELESS-TIPIN heterodimer binds preferably to guanine-rich quadruplex-forming (G4) DNA structures. Associates with the MCM2-7 complex. Interacts with DNA polymerases alpha, delta and epsilon. Interacts with DDX11; this interaction increases recruitment of both proteins onto chromatin in response to replication stress induction by hydroxyurea. Interacts with PARP1; interaction is direct and independent of poly-ADP-ribose. As to expression, predominantly and robustly expressed in proliferative organs (spleen, thymus, intestine and testis) compared to those more differentiated such as kidney and liver (at protein level). Expressed in all tissues examined including brain, heart, lung, liver, skeletal muscle, kidney, placenta, pancreas, spleen, thymus and testis. Strongly expressed in the suprachiasmatic nucleus (SCN) and pars tuberalis, moderately in the cingulate cortex, pyrimidal cell layer of the piriform cortex, periventricular part of the caudate putamen, and granular layer of the cerebellum, and weakly in the cerebral cortex, gyrus dentatus, hippocampus and thalamic nuclei. In embryonic kidney, expression is highest in regions of active ureteric bud cell branching.

Its subcellular location is the nucleus. The protein resides in the chromosome. Functionally, plays an important role in the control of DNA replication, maintenance of replication fork stability, maintenance of genome stability throughout normal DNA replication, DNA repair and in the regulation of the circadian clock. Required to stabilize replication forks during DNA replication by forming a complex with TIPIN: this complex regulates DNA replication processes under both normal and stress conditions, stabilizes replication forks and influences both CHEK1 phosphorylation and the intra-S phase checkpoint in response to genotoxic stress. During DNA replication, inhibits the CMG complex ATPase activity and activates DNA polymerases catalytic activities, coupling DNA unwinding and DNA synthesis. TIMELESS promotes TIPIN nuclear localization. Plays a role in maintaining processive DNA replication past genomic guanine-rich DNA sequences that form G-quadruplex (G4) structures, possibly together with DDX1. Involved in cell survival after DNA damage or replication stress by promoting DNA repair. In response to double-strand breaks (DSBs), accumulates at DNA damage sites and promotes homologous recombination repair via its interaction with PARP1. May be specifically required for the ATR-CHEK1 pathway in the replication checkpoint induced by hydroxyurea or ultraviolet light. Involved in the determination of period length and in the DNA damage-dependent phase advancing of the circadian clock. Negatively regulates CLOCK|NPAS2-ARTNL/BMAL1|ARTNL2/BMAL2-induced transactivation of PER1 possibly via translocation of PER1 into the nucleus. May also play an important role in epithelial cell morphogenesis and formation of branching tubules. This Mus musculus (Mouse) protein is Protein timeless homolog.